The sequence spans 364 residues: MREETREQPAPLRSGLTTGSCATATSLAAAKLLLTGQRNDAVDITLPKGKVVQMRLEFCRLIGECAEAGTLKDAGDDPDVTHGALVYSQVRLLVEPGIGFVAGSGVGTVTRPGLVLAVGEPAINPVPRRMISEHLQHLADACGYLGGFEVTVNVQGGEQLALKTMNPRLGILGGLSILGTSGIVRPFSCAAYIASIHQGIDVAHTNGYTHIAACTGNASEDTMRRVYGLPEIALIEMGDFVGAVLKHLRKVPVPRLTLCGGFGKISKLAAGHMDLHSRHSSIDLPQLAGWAADIGADEALQAAISGANTSQQALALAHAAGIALGDAVCAHALAFARSVVPAQVHVEVFAIDRQGGIVGQAGVQ.

The protein belongs to the CbiD family.

The catalysed reaction is Co-precorrin-5B + S-adenosyl-L-methionine = Co-precorrin-6A + S-adenosyl-L-homocysteine. It functions in the pathway cofactor biosynthesis; adenosylcobalamin biosynthesis; cob(II)yrinate a,c-diamide from sirohydrochlorin (anaerobic route): step 6/10. Functionally, catalyzes the methylation of C-1 in cobalt-precorrin-5B to form cobalt-precorrin-6A. In Pseudomonas putida (strain ATCC 47054 / DSM 6125 / CFBP 8728 / NCIMB 11950 / KT2440), this protein is Cobalt-precorrin-5B C(1)-methyltransferase.